We begin with the raw amino-acid sequence, 84 residues long: Large ribosomal subunit protein bL27c (84 aa).

The interval 1–23 (MAHKKGAGSTKNGRDSNAKRLGV) is disordered.

This sequence belongs to the bacterial ribosomal protein bL27 family.

It is found in the plastid. The protein localises to the chloroplast. This Thalassiosira pseudonana (Marine diatom) protein is Large ribosomal subunit protein bL27c.